A 32-amino-acid chain; its full sequence is Cytochrome b6-f complex subunit 7 (32 aa).

Residues 5–25 traverse the membrane as a helical segment; sequence IFTVAGVMWALVLTGLSVGFG.

This sequence belongs to the PetM family. In terms of assembly, the 4 large subunits of the cytochrome b6-f complex are cytochrome b6, subunit IV (17 kDa polypeptide, PetD), cytochrome f and the Rieske protein, while the 4 small subunits are PetG, PetL, PetM and PetN. The complex functions as a dimer.

Its subcellular location is the plastid. The protein resides in the chloroplast thylakoid membrane. Its function is as follows. Component of the cytochrome b6-f complex, which mediates electron transfer between photosystem II (PSII) and photosystem I (PSI), cyclic electron flow around PSI, and state transitions. This is Cytochrome b6-f complex subunit 7 from Emiliania huxleyi (Coccolithophore).